A 196-amino-acid polypeptide reads, in one-letter code: HTH-type transcriptional regulator EcpR (196 aa).

The HTH luxR-type domain maps to 138 to 196 (KDIKKDKITDREMEIIRMTAQGMLPKSIARIENCSVKTVYTHRRNAEAKLYSKIYKLVP). The segment at residues 162–181 (PKSIARIENCSVKTVYTHRR) is a DNA-binding region (H-T-H motif).

This sequence belongs to the EcpR/MatA family.

The protein resides in the cytoplasm. Its function is as follows. Part of the ecpRABCDE operon, which encodes the E.coli common pilus (ECP). ECP is found in both commensal and pathogenic strains and plays a dual role in early-stage biofilm development and host cell recognition. Positively regulates the expression of the ecp operon. The polypeptide is HTH-type transcriptional regulator EcpR (ecpR) (Escherichia coli O17:K52:H18 (strain UMN026 / ExPEC)).